A 1364-amino-acid polypeptide reads, in one-letter code: Kinectin (1364 aa).

Over M1–S6 the chain is Cytoplasmic. The chain crosses the membrane as a helical; Signal-anchor for type II membrane protein span at residues T7–M29. The Lumenal segment spans residues K30 to E1364. 4 stretches are compositionally biased toward basic and acidic residues: residues K46–K56, H73–L86, Q121–G135, and Q170–T179. A disordered region spans residues K46 to K207. N202, N267, N623, N638, N704, N775, N976, N1061, N1088, and N1094 each carry an N-linked (GlcNAc...) asparagine glycan. Positions K315–L1085 form a coiled coil. A coiled-coil region spans residues S1116–V1306.

Belongs to the kinectin family. In terms of assembly, parallel homodimers formed between the membrane-bound and the cytosolic form, and also between 2 cytosolic forms. In terms of processing, both the membrane and cytoplasmic forms seem to be myristoylated.

The protein resides in the endoplasmic reticulum membrane. Functionally, receptor for kinesin thus involved in kinesin-driven vesicle motility. The chain is Kinectin (KTN1) from Gallus gallus (Chicken).